Reading from the N-terminus, the 368-residue chain is Alanine racemase (368 aa).

K40 serves as the catalytic Proton acceptor; specific for D-alanine. K40 is modified (N6-(pyridoxal phosphate)lysine). R134 provides a ligand contact to substrate. Y263 serves as the catalytic Proton acceptor; specific for L-alanine. Residue M310 participates in substrate binding.

The protein belongs to the alanine racemase family. It depends on pyridoxal 5'-phosphate as a cofactor.

It carries out the reaction L-alanine = D-alanine. Its pathway is amino-acid biosynthesis; D-alanine biosynthesis; D-alanine from L-alanine: step 1/1. Catalyzes the interconversion of L-alanine and D-alanine. May also act on other amino acids. The sequence is that of Alanine racemase (alr) from Listeria innocua serovar 6a (strain ATCC BAA-680 / CLIP 11262).